A 248-amino-acid chain; its full sequence is Myelin protein P0 (248 aa).

The N-terminal stretch at 1 to 29 (MAPGAPSSSPSPILAALLFSSLVLSPALA) is a signal peptide. Residues 30 to 143 (IVVYTDREIY…DIVGKTSQVT (114 aa)) form the Ig-like V-type domain. The Extracellular portion of the chain corresponds to 30–153 (IVVYTDREIY…LYVFEKVPTR (124 aa)). A disulfide bridge links C50 with C127. N122 carries an N-linked (GlcNAc...) (complex) asparagine glycan. Residues 154 to 179 (YGVVLGAVIGGILGVVLLLLLLFYLI) traverse the membrane as a helical segment. Topologically, residues 180 to 248 (RYCWLRRQAA…GLGESRKDKK (69 aa)) are cytoplasmic. At S210 the chain carries Phosphoserine; by PKC. A disordered region spans residues 222-248 (MLDHSRSTKAASEKKSKGLGESRKDKK). Residues 224–248 (DHSRSTKAASEKKSKGLGESRKDKK) show a composition bias toward basic and acidic residues. 2 positions are modified to phosphoserine: S226 and S228. S233 carries the post-translational modification Phosphoserine; by PKC. 2 positions are modified to phosphoserine: S237 and S243.

Belongs to the myelin P0 protein family. In terms of assembly, homodimer and homotetramer. In terms of processing, N-glycosylated; contains sulfate-substituted glycan. As to expression, found only in peripheral nervous system Schwann cells.

The protein localises to the cell membrane. Its function is as follows. Is an adhesion molecule necessary for normal myelination in the peripheral nervous system. It mediates adhesion between adjacent myelin wraps and ultimately drives myelin compaction. The sequence is that of Myelin protein P0 (Mpz) from Mus musculus (Mouse).